A 220-amino-acid polypeptide reads, in one-letter code: Cytidylate kinase (220 aa).

Position 9 to 17 (9 to 17 (GPAASGKST)) interacts with ATP.

It belongs to the cytidylate kinase family. Type 1 subfamily.

It is found in the cytoplasm. The catalysed reaction is CMP + ATP = CDP + ADP. The enzyme catalyses dCMP + ATP = dCDP + ADP. The protein is Cytidylate kinase of Thermotoga sp. (strain RQ2).